A 569-amino-acid polypeptide reads, in one-letter code: Carboxylesterase 3 (569 aa).

A signal peptide spans 1 to 24 (MRLHRLRARLNAVAFGLLLLLVHG). Cys95 and Cys122 are joined by a disulfide. Asn103 is a glycosylation site (N-linked (GlcNAc...) asparagine). Ser227 acts as the Acyl-ester intermediate in catalysis. Cys279 and Cys290 are oxidised to a cystine. Catalysis depends on charge relay system residues Glu345 and His458. Positions 566–569 (QEDL) match the Prevents secretion from ER motif.

It belongs to the type-B carboxylesterase/lipase family. Post-translationally, N-glycosylated.

It is found in the endoplasmic reticulum lumen. The enzyme catalyses a carboxylic ester + H2O = an alcohol + a carboxylate + H(+). In terms of biological role, involved in the detoxification of xenobiotics and in the activation of ester and amide prodrugs. This is Carboxylesterase 3 (CES3) from Pongo abelii (Sumatran orangutan).